The chain runs to 256 residues: 5'-nucleotidase SurE (256 aa).

A divalent metal cation-binding residues include Asp9, Asp10, Ser42, and Asn95.

The protein belongs to the SurE nucleotidase family. Requires a divalent metal cation as cofactor.

It localises to the cytoplasm. It carries out the reaction a ribonucleoside 5'-phosphate + H2O = a ribonucleoside + phosphate. Its function is as follows. Nucleotidase that shows phosphatase activity on nucleoside 5'-monophosphates. The protein is 5'-nucleotidase SurE of Campylobacter curvus (strain 525.92).